A 516-amino-acid chain; its full sequence is (R)-citramalate synthase CimA (516 aa).

In terms of domain architecture, Pyruvate carboxyltransferase spans 8–269; the sequence is LEILDVTLRD…KTNINEIAIT (262 aa). The active-site Proton donor is arginine 16. Pyruvate is bound by residues 16 to 17 and tyrosine 144; that span reads RD. Aspartate 17 serves as a coordination point for Mn(2+). Glutamate 146 serves as the catalytic Proton acceptor. Pyruvate is bound at residue threonine 179. Positions 207 and 209 each coordinate Mn(2+).

The protein belongs to the alpha-IPM synthase/homocitrate synthase family. As to quaternary structure, homodimer. It depends on Mn(2+) as a cofactor.

It catalyses the reaction pyruvate + acetyl-CoA + H2O = (3R)-citramalate + CoA + H(+). It participates in amino-acid biosynthesis; L-isoleucine biosynthesis; 2-oxobutanoate from pyruvate: step 1/3. Regulated by the end-product isoleucine via a feedback inhibition. The binding of isoleucine has inhibitory effects on the binding of both pyruvate and acetyl-CoA. May act via conformational change of the dimer interface of the regulatory domain, leading to inhibition of the catalytic reaction. Functionally, catalyzes the condensation of pyruvate and acetyl-coenzyme A to form (R)-citramalate. Shows strict substrate specificity for pyruvate. Cannot use alpha-ketoisovalerate, alpha-ketobutyrate, alpha-ketoisocaproate, alpha-ketoglutarate or glyoxylate. This chain is (R)-citramalate synthase CimA, found in Leptospira interrogans serogroup Icterohaemorrhagiae serovar Lai (strain 56601).